We begin with the raw amino-acid sequence, 381 residues long: Succinyl-diaminopimelate desuccinylase (381 aa).

Residue His-68 participates in Zn(2+) binding. Asp-70 is a catalytic residue. Asp-101 lines the Zn(2+) pocket. Catalysis depends on Glu-135, which acts as the Proton acceptor. Residues Glu-136, Glu-164, and His-350 each coordinate Zn(2+).

This sequence belongs to the peptidase M20A family. DapE subfamily. In terms of assembly, homodimer. The cofactor is Zn(2+). Requires Co(2+) as cofactor.

The enzyme catalyses N-succinyl-(2S,6S)-2,6-diaminopimelate + H2O = (2S,6S)-2,6-diaminopimelate + succinate. It participates in amino-acid biosynthesis; L-lysine biosynthesis via DAP pathway; LL-2,6-diaminopimelate from (S)-tetrahydrodipicolinate (succinylase route): step 3/3. Its function is as follows. Catalyzes the hydrolysis of N-succinyl-L,L-diaminopimelic acid (SDAP), forming succinate and LL-2,6-diaminopimelate (DAP), an intermediate involved in the bacterial biosynthesis of lysine and meso-diaminopimelic acid, an essential component of bacterial cell walls. This chain is Succinyl-diaminopimelate desuccinylase, found in Neisseria gonorrhoeae (strain ATCC 700825 / FA 1090).